Reading from the N-terminus, the 63-residue chain is Beta-defensin 6 (63 aa).

The signal sequence occupies residues 1–22 (MKIHYLLFAFILVMLSPLAAFS). Glutamine 23 is subject to Pyrrolidone carboxylic acid. 3 disulfides stabilise this stretch: cysteine 31–cysteine 59, cysteine 38–cysteine 52, and cysteine 42–cysteine 60.

It belongs to the beta-defensin family. Predominantly expressed in skeletal muscle, also expressed in esophagus, tongue, and trachea. Also expressed in lung when induced by lipopolysaccharide.

The protein resides in the secreted. Has potent antibacterial activity against E.coli (ATCC 25922). In Mus musculus (Mouse), this protein is Beta-defensin 6 (Defb6).